A 185-amino-acid chain; its full sequence is ATP-dependent protease subunit HslV (185 aa).

Residue T12 is part of the active site. The Na(+) site is built by A168, C171, and T174.

It belongs to the peptidase T1B family. HslV subfamily. A double ring-shaped homohexamer of HslV is capped on each side by a ring-shaped HslU homohexamer. The assembly of the HslU/HslV complex is dependent on binding of ATP.

It is found in the cytoplasm. The enzyme catalyses ATP-dependent cleavage of peptide bonds with broad specificity.. Its activity is regulated as follows. Allosterically activated by HslU binding. Functionally, protease subunit of a proteasome-like degradation complex believed to be a general protein degrading machinery. This Dinoroseobacter shibae (strain DSM 16493 / NCIMB 14021 / DFL 12) protein is ATP-dependent protease subunit HslV.